Here is a 391-residue protein sequence, read N- to C-terminus: Na(+)/H(+) antiporter NhaA (391 aa).

A run of 11 helical transmembrane segments spans residues 14–34, 59–79, 95–115, 125–145, 154–174, 180–200, 219–239, 254–274, 292–312, 328–348, and 357–377; these read GGII…LGAT, MLLW…GLEV, AFPV…YLAF, GWAI…ALLG, IFLM…IALF, SILS…LNIF, VLKS…FIPL, VLHP…NAGV, IIAG…WLAL, IMAV…ISTL, and LIVW…FVGY.

The protein belongs to the NhaA Na(+)/H(+) (TC 2.A.33) antiporter family.

The protein localises to the cell inner membrane. It catalyses the reaction Na(+)(in) + 2 H(+)(out) = Na(+)(out) + 2 H(+)(in). Its function is as follows. Na(+)/H(+) antiporter that extrudes sodium in exchange for external protons. The chain is Na(+)/H(+) antiporter NhaA from Enterobacter sp. (strain 638).